Consider the following 223-residue polypeptide: Carnitine transport permease protein OpuCD (223 aa).

An ABC transmembrane type-1 domain is found at 22–202 (FWRHFLMSAY…VMAILADVLL (181 aa)). 5 helical membrane-spanning segments follow: residues 27–47 (LMSA…GVYI), 63–83 (IIQT…MGLG), 87–107 (VVLS…YTGI), 148–168 (ALVI…GGLG), and 182–202 (AIIL…DVLL).

This sequence belongs to the binding-protein-dependent transport system permease family. As to quaternary structure, the complex is composed of two ATP-binding proteins (OpuCA), two transmembrane proteins (OpuCB and OpuCD) and a solute-binding protein (OpuCC).

It is found in the cell membrane. Part of the ABC transporter complex OpuCABCD involved in carnitine uptake. Probably responsible for the translocation of the substrate across the membrane. Involved, with BetL and GbuABC, in osmoprotection and cryoprotection of Listeria. Can also mediate weak glycine betaine transport. The sequence is that of Carnitine transport permease protein OpuCD (opuCD) from Listeria monocytogenes serotype 1/2a (strain 10403S).